The chain runs to 337 residues: Probable RuBisCO transcriptional regulator (337 aa).

The 58-residue stretch at 6-63 folds into the HTH lysR-type domain; it reads FTLDQLRILKAIAVEGSFKRAADSLYVSQPAVSLQVQNLERQLDVPLFDRGGRRAQLT. Positions 23-42 form a DNA-binding region, H-T-H motif; that stretch reads FKRAADSLYVSQPAVSLQVQ.

Belongs to the LysR transcriptional regulatory family.

In terms of biological role, trans-acting transcriptional regulator of RuBisCO genes (rbcL and rbcS) expression. The chain is Probable RuBisCO transcriptional regulator (rbcR) from Nostoc sp. (strain PCC 7120 / SAG 25.82 / UTEX 2576).